The chain runs to 469 residues: Phenylalanine--tRNA ligase, mitochondrial (469 aa).

The N-terminal 17 residues, 1-17 (MFLNRMMKTRTGLYRLY), are a transit peptide targeting the mitochondrion. Residues 126-129 (SAHE), R155, 162-164 (THY), 169-171 (QME), E302, and F329 contribute to the substrate site. Residues 372–469 (SKHPGSFRDV…LVKEYSVELR (98 aa)) enclose the FDX-ACB domain.

It belongs to the class-II aminoacyl-tRNA synthetase family. In terms of assembly, monomer.

It is found in the mitochondrion matrix. The enzyme catalyses tRNA(Phe) + L-phenylalanine + ATP = L-phenylalanyl-tRNA(Phe) + AMP + diphosphate + H(+). Its function is as follows. Is responsible for the charging of tRNA(Phe) with phenylalanine in mitochondrial translation. The protein is Phenylalanine--tRNA ligase, mitochondrial (MSF1) of Saccharomyces cerevisiae (strain ATCC 204508 / S288c) (Baker's yeast).